The following is a 92-amino-acid chain: C-C motif chemokine 4 (92 aa).

The N-terminal stretch at 1–23 is a signal peptide; that stretch reads MKLCVTVLSLLVLAAAFCSPALS. Cystine bridges form between cysteine 34–cysteine 58 and cysteine 35–cysteine 74.

The protein belongs to the intercrine beta (chemokine CC) family. As to quaternary structure, homodimer. Interacts with CCR5. As to expression, detected in peripheral blood mononuclear cells and lymph nodes.

Its subcellular location is the secreted. Its function is as follows. Monokine with inflammatory and chemokinetic properties. This Macaca mulatta (Rhesus macaque) protein is C-C motif chemokine 4 (CCL4).